We begin with the raw amino-acid sequence, 195 residues long: Morphogenetic protein (195 aa).

Its function is as follows. Assembly factor active in membrane morphogenesis. In Pseudomonas phage phi6 (Bacteriophage phi-6), this protein is Morphogenetic protein (P12).